A 457-amino-acid chain; its full sequence is Bifunctional protein GlmU (457 aa).

The tract at residues 1-230 is pyrophosphorylase; sequence MSKRYAVVLA…FEESLGVNDR (230 aa). UDP-N-acetyl-alpha-D-glucosamine contacts are provided by residues 9 to 12, lysine 23, glutamine 73, and 78 to 79; these read LAAG and GT. Aspartate 103 contacts Mg(2+). 4 residues coordinate UDP-N-acetyl-alpha-D-glucosamine: glycine 140, glutamate 155, asparagine 170, and asparagine 228. Residue asparagine 228 participates in Mg(2+) binding. The tract at residues 231 to 251 is linker; that stretch reads IALAEASRLMQRRINENHMRN. Residues 252-457 are N-acetyltransferase; sequence GVTLVNPENT…GYAKHLNHGK (206 aa). Arginine 333 and lysine 351 together coordinate UDP-N-acetyl-alpha-D-glucosamine. Histidine 363 serves as the catalytic Proton acceptor. UDP-N-acetyl-alpha-D-glucosamine is bound by residues tyrosine 366 and asparagine 377. Acetyl-CoA contacts are provided by residues 386-387, alanine 423, and arginine 440; that span reads NY.

It in the N-terminal section; belongs to the N-acetylglucosamine-1-phosphate uridyltransferase family. In the C-terminal section; belongs to the transferase hexapeptide repeat family. In terms of assembly, homotrimer. It depends on Mg(2+) as a cofactor.

It is found in the cytoplasm. It catalyses the reaction alpha-D-glucosamine 1-phosphate + acetyl-CoA = N-acetyl-alpha-D-glucosamine 1-phosphate + CoA + H(+). It carries out the reaction N-acetyl-alpha-D-glucosamine 1-phosphate + UTP + H(+) = UDP-N-acetyl-alpha-D-glucosamine + diphosphate. Its pathway is nucleotide-sugar biosynthesis; UDP-N-acetyl-alpha-D-glucosamine biosynthesis; N-acetyl-alpha-D-glucosamine 1-phosphate from alpha-D-glucosamine 6-phosphate (route II): step 2/2. It participates in nucleotide-sugar biosynthesis; UDP-N-acetyl-alpha-D-glucosamine biosynthesis; UDP-N-acetyl-alpha-D-glucosamine from N-acetyl-alpha-D-glucosamine 1-phosphate: step 1/1. The protein operates within bacterial outer membrane biogenesis; LPS lipid A biosynthesis. In terms of biological role, catalyzes the last two sequential reactions in the de novo biosynthetic pathway for UDP-N-acetylglucosamine (UDP-GlcNAc). The C-terminal domain catalyzes the transfer of acetyl group from acetyl coenzyme A to glucosamine-1-phosphate (GlcN-1-P) to produce N-acetylglucosamine-1-phosphate (GlcNAc-1-P), which is converted into UDP-GlcNAc by the transfer of uridine 5-monophosphate (from uridine 5-triphosphate), a reaction catalyzed by the N-terminal domain. In Listeria monocytogenes serotype 4b (strain CLIP80459), this protein is Bifunctional protein GlmU.